The primary structure comprises 360 residues: Phospho-N-acetylmuramoyl-pentapeptide-transferase (360 aa).

The next 10 helical transmembrane spans lie at 25–45, 73–93, 97–117, 142–162, 168–188, 199–219, 236–256, 263–283, 288–308, and 338–358; these read RGIL…PWMI, TMGG…WADL, YVWV…VDDY, VGAA…TLII, ASIP…VGSS, GLAI…CYLS, AGEL…FLWF, VFMG…IAVI, IVLF…VIQV, and VIVR…ATLK.

This sequence belongs to the glycosyltransferase 4 family. MraY subfamily. Requires Mg(2+) as cofactor.

It localises to the cell inner membrane. It catalyses the reaction UDP-N-acetyl-alpha-D-muramoyl-L-alanyl-gamma-D-glutamyl-meso-2,6-diaminopimeloyl-D-alanyl-D-alanine + di-trans,octa-cis-undecaprenyl phosphate = di-trans,octa-cis-undecaprenyl diphospho-N-acetyl-alpha-D-muramoyl-L-alanyl-D-glutamyl-meso-2,6-diaminopimeloyl-D-alanyl-D-alanine + UMP. The protein operates within cell wall biogenesis; peptidoglycan biosynthesis. Its function is as follows. Catalyzes the initial step of the lipid cycle reactions in the biosynthesis of the cell wall peptidoglycan: transfers peptidoglycan precursor phospho-MurNAc-pentapeptide from UDP-MurNAc-pentapeptide onto the lipid carrier undecaprenyl phosphate, yielding undecaprenyl-pyrophosphoryl-MurNAc-pentapeptide, known as lipid I. The polypeptide is Phospho-N-acetylmuramoyl-pentapeptide-transferase (Pseudomonas fluorescens (strain SBW25)).